Consider the following 835-residue polypeptide: MKVLALRRSVAQVYADTQIYTHDETKDDYENAFLISNLTTHNILYLNYSVKTLQILNKSGIAAVEIQKMDELFTLIRCNFTYDYIEDIVYLHDYSYYTNNEIRTDQHWVTKTNIENYLLPGWKLTYVGYNGNDTRGHYNFSFKCQNAATDDDAIIEYIYSNELDFQNFILKKIKERMTTSLPIARLSNRVFRDKLFKTLVSDYSKVVNVGPRNESMFTFLDHPSIKQFSNGPYLVKDTIKLKQERWLGKRLSQFDIGQYKNMLNVLTTLYQYYDMYHEKPIIYMVGSAPSYWIHDVRQYSNLKFETWDPLDTPYSDLHHKELFYISDVTKLKDNSILYVDIRTDRESIDWKTWRKIVEEQTINNLNIAYRYLSTGKAKVCCVKMTAMDLELPISAKLLHHPTTEIRSEFYLIMDIWDSKNIKRFIPKGVLYSYINNIITENVFIQQPFKLKTLRNEYVVALYALSNDFNNREDVIKLVNNQKNALITVRINNTFKDEPKVGFKDIYDWTFLPTDFETNESIITSYDGCLGMFGLSISLASKPTGNNHLFILSGTNKYFKLDQFANHMSISRRSHQIRFSESATSYSGYIFRDLSNNNFNLIGTNVENSVSGHVYNALIYYRYNYSFDLKRWIYLHSTNKASIEGGRYYEHAPIELIYACRSAREFARLQDDLTVLRYSNEIENYINKVYSITYADDPNYFIGIKFKNIPYEYDVKVPHLTFGVLNISDSMVPDVIAILKKFKSELFRMDITTSYTYMLSDEIYVANVSGVLSTYFKLYNAFYKEQITFGQSRMFIPHITLSFSDKKVVRIDSTRLNIDFIYLRKIKGDTVFDMAE.

Residues 171-245 (KKIKERMTTS…KDTIKLKQER (75 aa)) are N7-methyltransferase activity. Residues 246–428 (WLGKRLSQFD…KNIKRFIPKG (183 aa)) form a 2'-O-methyltransferase activity region. The interval 429-555 (VLYSYINNII…NHLFILSGTN (127 aa)) is N7-methyltransferase activity. The segment at 556 to 692 (KYFKLDQFAN…NYINKVYSIT (137 aa)) is GTase/RTPase activity. A 2'-5'-phosphodiesterase activity region spans residues 693-835 (YADDPNYFIG…KGDTVFDMAE (143 aa)). Catalysis depends on for 2'-5'-phosphodiesterase activity residues His-718, Thr-720, His-797, and Thr-799.

Belongs to the rotavirus VP3 family. In terms of assembly, interacts with VP1. Interacts with VP2.

The protein resides in the virion. The catalysed reaction is a 5'-end diphospho-ribonucleoside in mRNA + GTP + H(+) = a 5'-end (5'-triphosphoguanosine)-ribonucleoside in mRNA + diphosphate. The enzyme catalyses a 5'-end (5'-triphosphoguanosine)-ribonucleoside in mRNA + S-adenosyl-L-methionine = a 5'-end (N(7)-methyl 5'-triphosphoguanosine)-ribonucleoside in mRNA + S-adenosyl-L-homocysteine. It catalyses the reaction 5'-triphosphoadenylyl-(2'-&gt;5')-adenylyl-(2'-&gt;5')-adenosine + 2 H2O = 2 AMP + ATP + 2 H(+). Multifunctional enzyme involved in mRNA capping. Catalyzes the formation of the 5' cap structure on the viral plus-strand transcripts. Specifically binds to GTP and displays guanylyltransferase and methyltransferase activities. Has affinity for ssRNA but not for dsRNA. Capping activity is non-specific and caps RNAs that initiate with either a G or an A residue. Together with VP1 polymerase, forms a VP1-VP3 complex positioned near the channels situated at each of the five-fold vertices of the core. Following infection, the outermost layer of the virus is lost, leaving a double-layered particle (DLP) made up of the core and VP6 shell. VP1 then catalyzes the transcription of fully conservative plus-strand genomic RNAs that are capped by VP3 and extruded through the DLP's channels into the cytoplasm where they function as mRNAs for translation of viral proteins. DLPs probably have an RNA triphosphatase activity as well, whereas open cores do not. In terms of biological role, counteracts the host innate immune response thanks to its phosphodiesterase that degrades the 5'-triphosphorylated, 2'-5' linked adenylate oligomers produced by the host cell IFN-inducible 2',5'-oligoadenylate synthetase (OAS). The host RNaseL is therefore not activated. The protein is Protein VP3 of Homo sapiens (Human).